A 679-amino-acid polypeptide reads, in one-letter code: Protein CASP (679 aa).

Over 1–614 the chain is Cytoplasmic; the sequence is MDTSVYSHAL…VILQNKMTRM (614 aa). Coiled coils occupy residues 14–90 and 178–341; these read AKAD…EKVL and RNWK…NYSD. At serine 364 the chain carries Phosphoserine. Positions 385–444 form a coiled coil; that stretch reads ANKKLQATLAEYRSKSTAQEEERNELKKSVDQLKQQIATLKEANEKLETDLEKVENVSPH. A phosphoserine mark is found at serine 450 and serine 453. Residues 492–540 adopt a coiled-coil conformation; it reads IVTKQRDRFRSRNMDLEKQLRQGNSEKGKLKLEISKLKGDNTKLYERIR. Position 555 is a phosphoserine (serine 555). Residues 615 to 635 form a helical; Anchor for type IV membrane protein membrane-spanning segment; it reads VFLFYCIGLHGLVFMMSMYVI. The Lumenal portion of the chain corresponds to 636 to 679; sequence NISGYMTPEVGIVQSAKSSSNLNGGLGGAEKVAAGVGSVHGINR.

It belongs to the CASP family.

Its subcellular location is the golgi apparatus membrane. May be involved in intra-Golgi transport. This chain is Protein CASP (COY1), found in Saccharomyces cerevisiae (strain ATCC 204508 / S288c) (Baker's yeast).